We begin with the raw amino-acid sequence, 278 residues long: Urease accessory protein UreD (278 aa).

The protein belongs to the UreD family. In terms of assembly, ureD, UreF and UreG form a complex that acts as a GTP-hydrolysis-dependent molecular chaperone, activating the urease apoprotein by helping to assemble the nickel containing metallocenter of UreC. The UreE protein probably delivers the nickel.

Its subcellular location is the cytoplasm. In terms of biological role, required for maturation of urease via the functional incorporation of the urease nickel metallocenter. The sequence is that of Urease accessory protein UreD from Escherichia coli.